The following is a 618-amino-acid chain: Methionine--tRNA ligase (618 aa).

The 'HIGH' region motif lies at 12 to 22 (YYVNAEPHLGH). Zn(2+)-binding residues include Cys-127, Cys-130, Cys-144, and His-147. The short motif at 297–301 (KMSKT) is the 'KMSKS' region element. Lys-300 is an ATP binding site. Residues 518–618 (DFAKVELRVA…GEVPPGAVVK (101 aa)) enclose the tRNA-binding domain.

It belongs to the class-I aminoacyl-tRNA synthetase family. MetG type 2A subfamily. As to quaternary structure, homodimer. Zn(2+) serves as cofactor.

It is found in the cytoplasm. The catalysed reaction is tRNA(Met) + L-methionine + ATP = L-methionyl-tRNA(Met) + AMP + diphosphate. Is required not only for elongation of protein synthesis but also for the initiation of all mRNA translation through initiator tRNA(fMet) aminoacylation. In Thermus thermophilus (strain ATCC 27634 / DSM 579 / HB8), this protein is Methionine--tRNA ligase (metG).